The sequence spans 392 residues: MNLNKNLPTGTRDKLFREAQAAYKIEQQVNHYFEKRGFKRIETPVIEFEDVFSSEHQADAKLYRFFDEKGRLTVLRPDMTLPIGRVVSTTGVMLPLKLSYSGKIFRANEDFGGEQNEQTQAGIEIIGYPSIKAEIECILSGIGVLNALEIPNFQIELGHAAIYRRVIQLLNLSETAEIDFRQLIQNKSLTGIKRFVANNPSTLDDFILAIPRLFGPATAILNQAKSLTTDKGILTALREMETIVEAVSYTADISVDLGLVQDFHYYTGIIFRGYADLAADNFLSGGRYDHLLEQFTSSSSPAVGLALNLDSLTTLQNRAGIIKKQTPTTLLIHYDLEALPQAEKFMQETPNSELSFFETASNAISFAKKWHIPEVVHVSSQGIQTILQREVD.

Belongs to the class-II aminoacyl-tRNA synthetase family. HisZ subfamily. Heteromultimer composed of HisG and HisZ subunits.

The protein localises to the cytoplasm. Its pathway is amino-acid biosynthesis; L-histidine biosynthesis; L-histidine from 5-phospho-alpha-D-ribose 1-diphosphate: step 1/9. Required for the first step of histidine biosynthesis. May allow the feedback regulation of ATP phosphoribosyltransferase activity by histidine. This Listeria monocytogenes serotype 4b (strain F2365) protein is ATP phosphoribosyltransferase regulatory subunit.